Here is a 245-residue protein sequence, read N- to C-terminus: Ribosomal protein L11 methyltransferase (245 aa).

S-adenosyl-L-methionine-binding residues include Thr-101, Gly-122, Asp-144, and Asn-184.

It belongs to the methyltransferase superfamily. PrmA family.

It localises to the cytoplasm. It carries out the reaction L-lysyl-[protein] + 3 S-adenosyl-L-methionine = N(6),N(6),N(6)-trimethyl-L-lysyl-[protein] + 3 S-adenosyl-L-homocysteine + 3 H(+). Its function is as follows. Methylates ribosomal protein L11. In Aquifex aeolicus (strain VF5), this protein is Ribosomal protein L11 methyltransferase.